The chain runs to 185 residues: MIDEILFEAEERMTATVEHTREDLTTIRTGRANPAMFNGVMAEYYGVPTPITQMSGITVPEPRMLLIKPYEMSSMQVIENAIRNSDLGVNPTNDGQVLRVTIPQLTEERRKDMVKLAKGKGEDGKIAIRNIRRKGMDQLKKLQKDGDAGEDEVQAAEKELDKVTAGFVAQVDEVVARKEKELMEV.

It belongs to the RRF family.

Its subcellular location is the cytoplasm. In terms of biological role, responsible for the release of ribosomes from messenger RNA at the termination of protein biosynthesis. May increase the efficiency of translation by recycling ribosomes from one round of translation to another. In Corynebacterium glutamicum (strain ATCC 13032 / DSM 20300 / JCM 1318 / BCRC 11384 / CCUG 27702 / LMG 3730 / NBRC 12168 / NCIMB 10025 / NRRL B-2784 / 534), this protein is Ribosome-recycling factor.